The sequence spans 231 residues: Uracil-DNA glycosylase (231 aa).

The active-site Proton acceptor is the aspartate 74.

It belongs to the uracil-DNA glycosylase (UDG) superfamily. UNG family.

It localises to the cytoplasm. It carries out the reaction Hydrolyzes single-stranded DNA or mismatched double-stranded DNA and polynucleotides, releasing free uracil.. In terms of biological role, excises uracil residues from the DNA which can arise as a result of misincorporation of dUMP residues by DNA polymerase or due to deamination of cytosine. The sequence is that of Uracil-DNA glycosylase from Campylobacter jejuni (strain RM1221).